Reading from the N-terminus, the 259-residue chain is Proteasome subunit alpha (259 aa).

It belongs to the peptidase T1A family. In terms of assembly, the 20S proteasome core is composed of 14 alpha and 14 beta subunits that assemble into four stacked heptameric rings, resulting in a barrel-shaped structure. The two inner rings, each composed of seven catalytic beta subunits, are sandwiched by two outer rings, each composed of seven alpha subunits. The catalytic chamber with the active sites is on the inside of the barrel. Has a gated structure, the ends of the cylinder being occluded by the N-termini of the alpha-subunits. Is capped at one or both ends by the proteasome regulatory ATPase, PAN.

It localises to the cytoplasm. Its activity is regulated as follows. The formation of the proteasomal ATPase PAN-20S proteasome complex, via the docking of the C-termini of PAN into the intersubunit pockets in the alpha-rings, triggers opening of the gate for substrate entry. Interconversion between the open-gate and close-gate conformations leads to a dynamic regulation of the 20S proteasome proteolysis activity. Its function is as follows. Component of the proteasome core, a large protease complex with broad specificity involved in protein degradation. In Methanococcus maripaludis (strain C6 / ATCC BAA-1332), this protein is Proteasome subunit alpha.